Consider the following 137-residue polypeptide: Protein PsiE homolog (137 aa).

4 helical membrane passes run 13–35 (ILLR…AFLI), 55–77 (YYMT…IVKY), 84–103 (FPLR…FIIV), and 107–129 (SATS…FLAN).

The protein belongs to the PsiE family.

It is found in the cell membrane. This chain is Protein PsiE homolog, found in Listeria monocytogenes serotype 4b (strain F2365).